The sequence spans 408 residues: Aminoacylase-1A (408 aa).

His-80 contributes to the Zn(2+) binding site. Residue Asp-82 is part of the active site. Zn(2+) is bound at residue Asp-113. The Proton acceptor role is filled by Glu-147. Glu-148, Glu-175, and His-373 together coordinate Zn(2+). At Ser-408 the chain carries Phosphoserine.

The protein belongs to the peptidase M20A family. Homodimer. Requires Zn(2+) as cofactor. Post-translationally, the N-terminus is blocked.

It is found in the cytoplasm. The enzyme catalyses an N-acyl-L-amino acid + H2O = an L-alpha-amino acid + a carboxylate. It carries out the reaction an N-acetyl-L-cysteine-S-conjugate + H2O = an S-substituted L-cysteine + acetate. Its function is as follows. Involved in the hydrolysis of N-acylated or N-acetylated amino acids (except L-aspartate). This Rattus norvegicus (Rat) protein is Aminoacylase-1A (Acy1a).